The chain runs to 518 residues: Ethanolamine kinase (518 aa).

The span at 1–19 shows a compositional bias: polar residues; that stretch reads MGTETKSNSYTGQISTSGG. Residues 1-88 are disordered; sequence MGTETKSNSY…DIRAKPEDKS (88 aa). Over residues 33–68 the composition is skewed to low complexity; the sequence is QTVNQQTLSLSQSNQVQNQLNSHSNSNSYPNPSGSE. Residues 69–88 are compositionally biased toward basic and acidic residues; sequence NKNENEQNSRDIRAKPEDKS. Phosphoserine occurs at positions 190 and 194.

It belongs to the choline/ethanolamine kinase family.

It localises to the cytoplasm. The enzyme catalyses ethanolamine + ATP = phosphoethanolamine + ADP + H(+). It participates in phospholipid metabolism; phosphatidylethanolamine biosynthesis; phosphatidylethanolamine from ethanolamine: step 1/3. Functionally, highly specific for ethanolamine phosphorylation. May be a rate-controlling step in phosphatidylethanolamine biosynthesis. This Drosophila melanogaster (Fruit fly) protein is Ethanolamine kinase (eas).